We begin with the raw amino-acid sequence, 198 residues long: WYSGMFAPNIKQEPISHHHHHHHAHHSHHQHPHDSNSNSNASSPHQSPLPSPNPPSNTILQLEQYLKQQQQQQQQQQQQQQQQPMDTLCAAAMTPSPSNNDQNSPLMLPGLPNPMQSIMLANLRPSPTATTTTTTPAAAPTTTAAAIALQANDKLQALTPPMDVTPPKSPAKSQQSCAEPEKEHDLMSNSSEDMKYMA.

Disordered stretches follow at residues 16-117 (SHHH…PMQS) and 152-198 (NDKL…KYMA). Over residues 17-31 (HHHHHHHAHHSHHQH) the composition is skewed to basic residues. Composition is skewed to low complexity over residues 35–46 (SNSNSNASSPHQ) and 68–83 (QQQQ…QQQQ). The span at 95–105 (PSPSNNDQNSP) shows a compositional bias: polar residues. The span at 179–198 (EPEKEHDLMSNSSEDMKYMA) shows a compositional bias: basic and acidic residues.

This sequence belongs to the hunchback C2H2-type zinc-finger protein family.

The protein localises to the nucleus. Functionally, gap class segmentation protein that controls development of head structures. The sequence is that of Protein hunchback (hb) from Drosophila disjuncta (Fruit fly).